A 344-amino-acid chain; its full sequence is HTH-type transcriptional repressor MelR (344 aa).

An HTH lacI-type domain is found at 2–58 (VRIKDIALKAKVSSATVSRILNEDESLSVAGETRQRVINIAEELGYQTVAKRRKSRG). Residues 4–23 (IKDIALKAKVSSATVSRILN) constitute a DNA-binding region (H-T-H motif).

The protein localises to the cytoplasm. Its function is as follows. Represses the melibiose operon melREDCA in the absence of melibiose or raffinose. Binds to two binding sites at the promoter region of the operon. The polypeptide is HTH-type transcriptional repressor MelR (Bacillus subtilis (strain 168)).